A 66-amino-acid chain; its full sequence is Large ribosomal subunit protein bL35 (66 aa).

Positions 20-40 are disordered; sequence GKVKHAQRGKRHGMIKRTKKQ.

This sequence belongs to the bacterial ribosomal protein bL35 family.

This chain is Large ribosomal subunit protein bL35, found in Nitrobacter winogradskyi (strain ATCC 25391 / DSM 10237 / CIP 104748 / NCIMB 11846 / Nb-255).